The primary structure comprises 344 residues: Uroporphyrinogen decarboxylase (344 aa).

Substrate is bound by residues 24–28, Phe-43, Asp-74, Tyr-151, Ser-206, and His-323; that span reads RQAGR.

The protein belongs to the uroporphyrinogen decarboxylase family. In terms of assembly, homodimer.

Its subcellular location is the cytoplasm. It catalyses the reaction uroporphyrinogen III + 4 H(+) = coproporphyrinogen III + 4 CO2. It participates in porphyrin-containing compound metabolism; protoporphyrin-IX biosynthesis; coproporphyrinogen-III from 5-aminolevulinate: step 4/4. Functionally, catalyzes the decarboxylation of four acetate groups of uroporphyrinogen-III to yield coproporphyrinogen-III. The polypeptide is Uroporphyrinogen decarboxylase (Rhodobacter capsulatus (Rhodopseudomonas capsulata)).